Reading from the N-terminus, the 364-residue chain is Popeye domain-containing protein 2 (364 aa).

N4 carries N-linked (GlcNAc...) asparagine glycosylation. 2 helical membrane-spanning segments follow: residues 37–57 (LLLG…FGFL) and 77–97 (IVLW…HLVY). Positions 276–333 (ADAGPESEKGDEEVCEPAVSPPQATPTSLQQTPPCSTPPATTNFPAPPTRARLSRPDS) are disordered. Positions 300-309 (TPTSLQQTPP) are enriched in polar residues. The residue at position 361 (T361) is a Phosphothreonine.

The protein belongs to the popeye family. In terms of tissue distribution, expressed predominantly in the heart and in the skeletal muscle.

The protein localises to the membrane. Its subcellular location is the cell membrane. The protein resides in the sarcolemma. In terms of biological role, important for the maintenance of cardiac function. Plays a regulatory function in heart rate dynamics mediated, at least in part, through cAMP-binding and, probably, by increasing cell surface expression of the potassium channel KCNK2 and enhancing current density. The protein is Popeye domain-containing protein 2 (POPDC2) of Homo sapiens (Human).